Consider the following 690-residue polypeptide: Glycine--tRNA ligase 1, mitochondrial (690 aa).

The N-terminal 24 residues, 1–24 (MSFFNISRRFYSQIVKKSVKIKRM), are a transit peptide targeting the mitochondrion. Serine 25 carries the post-translational modification N-acetylserine. The residue at position 226 (serine 226) is a Phosphoserine. Position 251 (glutamate 251) interacts with glycine. Residues 283 to 285 (RNE) and 294 to 295 (RV) contribute to the ATP site. A glycine-binding site is contributed by glutamate 302. 410–411 (EC) lines the ATP pocket. 2 positions are modified to phosphoserine: serine 476 and serine 528. A glycine-binding site is contributed by 531 to 533 (EPS). An ATP-binding site is contributed by arginine 538. Position 689 is a phosphothreonine (threonine 689).

This sequence belongs to the class-II aminoacyl-tRNA synthetase family. As to quaternary structure, homodimer.

The protein resides in the cytoplasm. It is found in the mitochondrion matrix. It catalyses the reaction tRNA(Gly) + glycine + ATP = glycyl-tRNA(Gly) + AMP + diphosphate. The catalysed reaction is 2 ATP + H(+) = P(1),P(4)-bis(5'-adenosyl) tetraphosphate + diphosphate. In terms of biological role, catalyzes the ATP-dependent ligation of glycine to the 3'-end of its cognate tRNA, via the formation of an aminoacyl-adenylate intermediate (Gly-AMP). Also produces diadenosine tetraphosphate (Ap4A), a universal pleiotropic signaling molecule needed for cell regulation pathways, by direct condensation of 2 ATPs. Thereby, may play a special role in Ap4A homeostasis. The sequence is that of Glycine--tRNA ligase 1, mitochondrial (GRS1) from Saccharomyces cerevisiae (strain ATCC 204508 / S288c) (Baker's yeast).